The following is a 366-amino-acid chain: Chorismate synthase (366 aa).

NADP(+) contacts are provided by R48 and R54. Residues 125 to 127 (RSS), 238 to 239 (NA), G278, 293 to 297 (KPTSS), and R319 each bind FMN.

This sequence belongs to the chorismate synthase family. Homotetramer. FMNH2 is required as a cofactor.

The catalysed reaction is 5-O-(1-carboxyvinyl)-3-phosphoshikimate = chorismate + phosphate. Its pathway is metabolic intermediate biosynthesis; chorismate biosynthesis; chorismate from D-erythrose 4-phosphate and phosphoenolpyruvate: step 7/7. In terms of biological role, catalyzes the anti-1,4-elimination of the C-3 phosphate and the C-6 proR hydrogen from 5-enolpyruvylshikimate-3-phosphate (EPSP) to yield chorismate, which is the branch point compound that serves as the starting substrate for the three terminal pathways of aromatic amino acid biosynthesis. This reaction introduces a second double bond into the aromatic ring system. The protein is Chorismate synthase of Paraburkholderia xenovorans (strain LB400).